Here is a 162-residue protein sequence, read N- to C-terminus: Iron-sulfur cluster assembly protein IscU (162 aa).

The protein belongs to the NifU family. In terms of assembly, homotrimer. Small proportion is monomeric. Interacts with IscS. Interacts with ABCB6. Component of a complex, at least composed of IscS, Isd11 and IscU. It depends on [4Fe-4S] cluster as a cofactor.

Its subcellular location is the mitochondrion. It functions in the pathway cofactor biosynthesis; iron-sulfur cluster biosynthesis. In terms of biological role, participates in iron-sulfur cluster formation (ISC) pathway for iron-sulfur (Fe-S) cluster biogenesis. Plays a role of a major scaffold protein for [Fe-S] assembly; assembles [4Fe-4S] clusters directly upon interaction with the catalytic component IscS-Isd11 as part of the scaffold complex. Can transfer [4Fe-4S] clusters to target apo-proteins. This is Iron-sulfur cluster assembly protein IscU from Plasmodium falciparum (isolate 3D7).